The sequence spans 219 residues: Charged multivesicular body protein 5 (219 aa).

Residues 22 to 153 (TNVDGRAESI…EIQEALSRSY (132 aa)) are a coiled coil.

Belongs to the SNF7 family. Probable peripherally associated component of the endosomal sorting required for transport complex III (ESCRT-III).

The protein resides in the cytoplasm. The protein localises to the cytosol. Its subcellular location is the endosome membrane. Its function is as follows. Probable peripherally associated component of the endosomal sorting required for transport complex III (ESCRT-III) which is involved in multivesicular bodies (MVBs) formation and sorting of endosomal cargo proteins into MVBs. MVBs contain intraluminal vesicles (ILVs) that are generated by invagination and scission from the limiting membrane of the endosome and mostly are delivered to lysosomes enabling degradation of membrane proteins, such as stimulated growth factor receptors, lysosomal enzymes and lipids. This is Charged multivesicular body protein 5 (chmp5) from Xenopus laevis (African clawed frog).